Here is a 184-residue protein sequence, read N- to C-terminus: Ribose 1,5-bisphosphate phosphokinase PhnN (184 aa).

11–18 (GPSGAGKD) contacts ATP.

It belongs to the ribose 1,5-bisphosphokinase family.

It carries out the reaction alpha-D-ribose 1,5-bisphosphate + ATP = 5-phospho-alpha-D-ribose 1-diphosphate + ADP. The protein operates within metabolic intermediate biosynthesis; 5-phospho-alpha-D-ribose 1-diphosphate biosynthesis; 5-phospho-alpha-D-ribose 1-diphosphate from D-ribose 5-phosphate (route II): step 3/3. Functionally, catalyzes the phosphorylation of ribose 1,5-bisphosphate to 5-phospho-D-ribosyl alpha-1-diphosphate (PRPP). The polypeptide is Ribose 1,5-bisphosphate phosphokinase PhnN (Burkholderia mallei (strain SAVP1)).